We begin with the raw amino-acid sequence, 446 residues long: Methionine aminopeptidase 2 (446 aa).

Residues 1–85 (MAGVTEGEDT…KNKKKKKKKI (85 aa)) are disordered. Residues 8–32 (EDTKVIESKINELNIDKPKLEDNNE) show a composition bias toward basic and acidic residues. Over residues 42–58 (SGDDDDDDKEEDDDNEI) the composition is skewed to acidic residues. Residues 73–85 (KKNKNKKKKKKKI) are compositionally biased toward basic residues. Residue His197 coordinates substrate. Positions 217, 228, and 299 each coordinate a divalent metal cation. His307 is a substrate binding site. Positions 332 and 427 each coordinate a divalent metal cation.

It belongs to the peptidase M24A family. Methionine aminopeptidase eukaryotic type 2 subfamily. Co(2+) serves as cofactor. Requires Zn(2+) as cofactor. Mn(2+) is required as a cofactor. The cofactor is Fe(2+).

It is found in the cytoplasm. It carries out the reaction Release of N-terminal amino acids, preferentially methionine, from peptides and arylamides.. Its function is as follows. Cotranslationally removes the N-terminal methionine from nascent proteins. The N-terminal methionine is often cleaved when the second residue in the primary sequence is small and uncharged (Met-Ala-, Cys, Gly, Pro, Ser, Thr, or Val). The chain is Methionine aminopeptidase 2 from Candida albicans (strain SC5314 / ATCC MYA-2876) (Yeast).